Here is a 250-residue protein sequence, read N- to C-terminus: MKFLGIIPARYASTRFPAKPLAMLGGKTVIQRVYEQVAGILDDAYVATDDERIEAAVKAFGGKVVMTSIDHKSGTDRCYEACTKIGGDFDVVVNIQGDEPFIQPSQLNAVKACFEDPTTQIATLVKPFTADEPFAVLENVNSPKVVLNKNWNALYFSRSIIPFQRNADKEDWLKGHTYYKHIGLYAYRTEVLKEITALPQSSLELAESLEQLRWLENGYKIKVGISDVETIGIDTPQDLKHAEEFLKNRS.

The protein belongs to the KdsB family.

The protein localises to the cytoplasm. It carries out the reaction 3-deoxy-alpha-D-manno-oct-2-ulosonate + CTP = CMP-3-deoxy-beta-D-manno-octulosonate + diphosphate. It functions in the pathway nucleotide-sugar biosynthesis; CMP-3-deoxy-D-manno-octulosonate biosynthesis; CMP-3-deoxy-D-manno-octulosonate from 3-deoxy-D-manno-octulosonate and CTP: step 1/1. Its pathway is bacterial outer membrane biogenesis; lipopolysaccharide biosynthesis. Functionally, activates KDO (a required 8-carbon sugar) for incorporation into bacterial lipopolysaccharide in Gram-negative bacteria. This is 3-deoxy-manno-octulosonate cytidylyltransferase from Bacteroides thetaiotaomicron (strain ATCC 29148 / DSM 2079 / JCM 5827 / CCUG 10774 / NCTC 10582 / VPI-5482 / E50).